A 238-amino-acid polypeptide reads, in one-letter code: Snake venom metalloproteinase HF-1 (238 aa).

In terms of domain architecture, Peptidase M12B spans 17 to 221 (RYIQLVVVAD…YNPQCILNKP (205 aa)). Position 106 (D106) interacts with Ca(2+). Intrachain disulfides connect C130–C216 and C174–C181. Position 158 (H158) interacts with Zn(2+). Residue E159 is part of the active site. Residues H162 and H168 each contribute to the Zn(2+) site. C216 and N219 together coordinate Ca(2+).

As to quaternary structure, monomer. Requires Zn(2+) as cofactor. In terms of tissue distribution, expressed by the venom gland.

It localises to the secreted. Inhibited by EDTA and EGTA. Inhibited by serum and antihemorrhagic factors Da2-I and Da2-II from D.albiventris. Not inhibited by PMSF or SBT-I. Its function is as follows. Snake venom zinc metalloprotease that is weakly hemorrhagic and has Aalpha, Bbeta fibrinogenolytic activities. Cleaves the Aalpha chain of fibrinogen first, followed by the Bbeta chain and shows no effect on the gamma chain. Has caseinolytic activity. Induces dose-dependent edema. The protein is Snake venom metalloproteinase HF-1 of Bothrops marajoensis (Marajo lancehead).